The chain runs to 172 residues: Adenine phosphoribosyltransferase (172 aa).

This sequence belongs to the purine/pyrimidine phosphoribosyltransferase family. Homodimer.

The protein resides in the cytoplasm. It catalyses the reaction AMP + diphosphate = 5-phospho-alpha-D-ribose 1-diphosphate + adenine. Its pathway is purine metabolism; AMP biosynthesis via salvage pathway; AMP from adenine: step 1/1. Functionally, catalyzes a salvage reaction resulting in the formation of AMP, that is energically less costly than de novo synthesis. This chain is Adenine phosphoribosyltransferase, found in Staphylococcus epidermidis (strain ATCC 35984 / DSM 28319 / BCRC 17069 / CCUG 31568 / BM 3577 / RP62A).